A 207-amino-acid polypeptide reads, in one-letter code: dTDP-4-dehydrorhamnose 3-epimerase (207 aa).

Substrate contacts are provided by residues Arg23, Asp28, 47–49 (QAN), and Arg59. His62 functions as the Proton acceptor in the catalytic mechanism. The substrate site is built by Lys72 and His119. Tyr132 functions as the Proton donor in the catalytic mechanism. Residues Glu143 and Arg167 each coordinate substrate.

It belongs to the dTDP-4-dehydrorhamnose 3,5-epimerase family.

It participates in antibiotic biosynthesis; novobiocin biosynthesis. Its function is as follows. dTDP-6-deoxy-D-xylo-4-hexulose 3-epimerase that acts together with NovU to catalyze the formation of dTDP-4-keto-6-deoxy-5-C-methyl-L-lyxo-hexose from dTDP-4-keto-6-deoxy-D-glucose in the novobiocin biosynthesis pathway, an aminocoumarin family antibiotic that targets bacterial DNA gyrases. The polypeptide is dTDP-4-dehydrorhamnose 3-epimerase (Streptomyces niveus (Streptomyces spheroides)).